A 454-amino-acid polypeptide reads, in one-letter code: F-box/WD repeat-containing protein 2 (454 aa).

The F-box domain maps to 54-101; it reads RDFLKLLPLELSFYLLKWLDPQTLLTCCLVSKQWNKVISACTEVWQTA. WD repeat units lie at residues 146 to 183, 185 to 221, 224 to 265, and 276 to 314; these read GHSARVYALYYKDGLLCTGSDDLSAKLWDVSTGQCVYG, QTHTCAAVKFDEQKLVTGSFDNTVACWEWSSGARTQH, GHTG…NTLT, and LQQCKVKSLLHSPGDYILLSADKYEIKIWPIGREINCKC. Position 298 is an N6-acetyllysine (Lys-298).

In terms of assembly, directly interacts with SKP1 and CUL1.

Substrate-recognition component of the SCF (SKP1-CUL1-F-box protein)-type E3 ubiquitin ligase complex. The sequence is that of F-box/WD repeat-containing protein 2 from Rattus norvegicus (Rat).